We begin with the raw amino-acid sequence, 353 residues long: MASSWCLPLALLVSNLAVSHSAEPSSTHAKRRLAQPSPGNGNALQYPEQGFQSHGHGNVRERGGRHGGQGAHSAKANTGAGLLSRSPLHPAARHEDDGTGLDGLSPVRLEMGPGGRERENGRGGFRNPSHARENHPLGPHKGKAQGHGHHFDHRRHGGRRDKGRHTKGFFPEPELDSSLKEGSVSSTIFGSGSSAVTTVMSEHPPMLPPASTKPKKSGRGKVQGEVMPTLDMTLFDWTDYEDMKPVDAWPSSRKKDKRRSKNLSSGNVTVDSDAIEPCDHHLDCLPGSCCDLRQHECKLHNRGLNNKCYDDCMCEEGFRCYAKFHRKLHVTRRRGRCVVPESANRDQGAFITV.

Positions 1-21 are cleaved as a signal peptide; sequence MASSWCLPLALLVSNLAVSHS. Disordered stretches follow at residues 23–183, 198–222, and 246–268; these read EPSS…KEGS, TVMSEHPPMLPPASTKPKKSGRGKV, and VDAWPSSRKKDKRRSKNLSSGNV. Basic residues predominate over residues 138-167; it reads GPHKGKAQGHGHHFDHRRHGGRRDKGRHTK. The segment covering 252–261 has biased composition (basic residues); that stretch reads SRKKDKRRSK. Asn-262 and Asn-267 each carry an N-linked (GlcNAc...) asparagine glycan.

Belongs to the draxin family.

The protein localises to the secreted. Its function is as follows. Chemorepulsive axon guidance protein required for the development of spinal cord and forebrain commissures. Acts as a chemorepulsive guidance protein for commissural axons during development. Able to inhibit or repel neurite outgrowth from dorsal spinal cord. This is Draxin-B (draxin-B) from Salmo salar (Atlantic salmon).